The primary structure comprises 606 residues: Dihydroxy-acid dehydratase ilvC, mitochondrial (606 aa).

Cys-84 is a binding site for [2Fe-2S] cluster. A Mg(2+)-binding site is contributed by Asp-116. Cys-157 is a [2Fe-2S] cluster binding site. Asp-158 serves as a coordination point for Mg(2+). A [2Fe-2S] cluster-binding site is contributed by Cys-232. Glu-485 is a Mg(2+) binding site. Ser-511 acts as the Proton acceptor in catalysis.

Belongs to the IlvD/Edd family. The cofactor is [2Fe-2S] cluster. Mg(2+) is required as a cofactor.

The protein resides in the mitochondrion. It catalyses the reaction (2R)-2,3-dihydroxy-3-methylbutanoate = 3-methyl-2-oxobutanoate + H2O. The enzyme catalyses (2R,3R)-2,3-dihydroxy-3-methylpentanoate = (S)-3-methyl-2-oxopentanoate + H2O. Its pathway is amino-acid biosynthesis; L-isoleucine biosynthesis; L-isoleucine from 2-oxobutanoate: step 3/4. The protein operates within amino-acid biosynthesis; L-valine biosynthesis; L-valine from pyruvate: step 3/4. DHAD activity is inhibited in dose-dependent manner by 2-hydroxy-3-methylbutyric acid with an IC(50) of about 8 mM. Its function is as follows. Dihydroxyacid dehydratase that catalyzes the third step in the common pathway leading to biosynthesis of branched-chain amino acids. Catalyzes the dehydration of (2R,3R)-2,3-dihydroxy-3-methylpentanoate (2,3-dihydroxy-3-methylvalerate) into 2-oxo-3-methylpentanoate (2-oxo-3-methylvalerate) and of (2R)-2,3-dihydroxy-3-methylbutanoate (2,3-dihydroxyisovalerate) into 2-oxo-3-methylbutanoate (2-oxoisovalerate), the penultimate precursor to L-isoleucine and L-valine, respectively. IlvC and the branched-chain amino acid biosynthesis are crucial for virulence and may be a potential target to develop antifungal agents. The protein is Dihydroxy-acid dehydratase ilvC, mitochondrial of Aspergillus fumigatus (strain ATCC MYA-4609 / CBS 101355 / FGSC A1100 / Af293) (Neosartorya fumigata).